The following is a 289-amino-acid chain: Formamidopyrimidine-DNA glycosylase 1 (289 aa).

Proline 2 serves as the catalytic Schiff-base intermediate with DNA. The active-site Proton donor is glutamate 3. Lysine 61 (proton donor; for beta-elimination activity) is an active-site residue. The DNA site is built by histidine 100, arginine 119, and lysine 165. Residues 251–285 (DAYGREGENCRRCGAVIRRERFMNRSSFYCPRCQP) form an FPG-type zinc finger. Catalysis depends on arginine 275, which acts as the Proton donor; for delta-elimination activity.

It belongs to the FPG family. As to quaternary structure, monomer. Zn(2+) serves as cofactor.

It carries out the reaction Hydrolysis of DNA containing ring-opened 7-methylguanine residues, releasing 2,6-diamino-4-hydroxy-5-(N-methyl)formamidopyrimidine.. It catalyses the reaction 2'-deoxyribonucleotide-(2'-deoxyribose 5'-phosphate)-2'-deoxyribonucleotide-DNA = a 3'-end 2'-deoxyribonucleotide-(2,3-dehydro-2,3-deoxyribose 5'-phosphate)-DNA + a 5'-end 5'-phospho-2'-deoxyribonucleoside-DNA + H(+). In terms of biological role, involved in base excision repair of DNA damaged by oxidation or by mutagenic agents. Acts as a DNA glycosylase that recognizes and removes damaged bases. Has a preference for oxidized purines, such as 7,8-dihydro-8-oxoguanine (8-oxoG) when paired with C, G or T, as well as methyl-faPy (formanidopyrimidine residues) in poly(dG-dC) and spiroiminodihydantoin:C base pairs. Unlike its E.coli ortholog has no activity on 8-oxoG:A. Has AP (apurinic/apyrimidinic) lyase activity and introduces nicks in the DNA strand. Cleaves the DNA backbone by beta-delta elimination to generate a single-strand break at the site of the removed base with both 3'- and 5'-phosphates. Cleaves ssDNA containing an AP site. Complements the H(2)O(2) sensitivity of an M.smegmatis fpg disruption mutant; upon expression in M.smegmatis excises 8-oxoG from dsDNA. This chain is Formamidopyrimidine-DNA glycosylase 1 (fpg1), found in Mycobacterium tuberculosis (strain ATCC 25618 / H37Rv).